The chain runs to 124 residues: MSQNPFEALGGGGFDMNALLQQAQQMQEQLQSAQERLTETVVDGTVAGGAVTVKVNGVGELVGVEIRAGGFDGSDPDDLSDLGDMIIAAYRDAKAQADALAGEALGPLAGGAEGLPGMPGQLGF.

The protein belongs to the YbaB/EbfC family. Homodimer.

It is found in the cytoplasm. The protein localises to the nucleoid. Functionally, binds to DNA and alters its conformation. May be involved in regulation of gene expression, nucleoid organization and DNA protection. The polypeptide is Nucleoid-associated protein Noca_0318 (Nocardioides sp. (strain ATCC BAA-499 / JS614)).